The sequence spans 731 residues: Cucumisin (731 aa).

An N-terminal signal peptide occupies residues 1–22 (MSSSLIFKLFFFSLFFSNRLAS). Positions 23 to 110 (RLDSDDDGKN…VFLNEMNELH (88 aa)) are cleaved as a propeptide — activation peptide. An Inhibitor I9 domain is found at 34 to 110 (YIVYMGRKLE…VFLNEMNELH (77 aa)). The Peptidase S8 domain occupies 114 to 584 (SWDFLGFPLT…SGHVNPLKAV (471 aa)). Residue Asp-140 is the Charge relay system of the active site. Cys-166 and Cys-174 are joined by a disulfide. His-204 acts as the Charge relay system in catalysis. Intrachain disulfides connect Cys-245–Cys-250 and Cys-380–Cys-397. Asn-466 carries N-linked (GlcNAc...) asparagine glycosylation. Residue Ser-525 is the Charge relay system of the active site. Positions 616 to 731 (GDYSACTSGN…RSPITITSLV (116 aa)) are excised as a propeptide. Residue Asn-652 is glycosylated (N-linked (GlcNAc...) asparagine).

This sequence belongs to the peptidase S8 family. As to quaternary structure, monomer and dimer. In terms of processing, the C-terminal propeptide is autocleaved. Specifically expressed in fruits. Expressed in sarcocarp (at protein level).

The protein localises to the secreted. The enzyme catalyses Hydrolysis of proteins with broad specificity.. The chain is Cucumisin from Cucumis melo (Muskmelon).